Reading from the N-terminus, the 880-residue chain is Interference hedgehog (880 aa).

Positions 1 to 20 (MTLLTSSLLLFSLLTSRLEA) are cleaved as a signal peptide. Topologically, residues 21-703 (IPVLEKSPAH…ETFNMSPMLT (683 aa)) are extracellular. Ig-like C2-type domains follow at residues 45–142 (PGVR…TARL), 132–232 (PLVV…ERIQ), 252–340 (PHLL…YIKV), and 346–432 (PQIV…LQVN). Cystine bridges form between Cys-68/Cys-126, Cys-173/Cys-220, Cys-276/Cys-324, and Cys-367/Cys-414. N-linked (GlcNAc...) asparagine glycans are attached at residues Asn-102 and Asn-209. The disordered stretch occupies residues 426–467 (GTLLQVNPKQIQEPRESGGTHRPKPNQGSKQKQMYPPTPPNV). Fibronectin type-III domains lie at 461-567 (PPTP…LQPG) and 575-670 (VPEL…TQRP). N-linked (GlcNAc...) asparagine glycosylation occurs at Asn-466. 4 residues coordinate heparin: Arg-497, Lys-501, Lys-503, and Arg-541. N-linked (GlcNAc...) asparagine glycosylation is present at Asn-557. The disordered stretch occupies residues 662-697 (LKQGRTQRPKTSTTEEPTLQMGDRDTTTPSHNETFN). Composition is skewed to polar residues over residues 665–678 (GRTQ…TEEP) and 688–697 (TTPSHNETFN). Asn-693 carries N-linked (GlcNAc...) asparagine glycosylation. A helical membrane pass occupies residues 704–724 (GTIGGGAVLILLLISTCLCVC). Over 725-880 (RRRTSRSRGN…SSGSLNSVGV (156 aa)) the chain is Cytoplasmic. 2 disordered regions span residues 728–762 (TSRS…QRQR) and 775–880 (QQQQ…SVGV). Low complexity-rich tracts occupy residues 823–837 (RAGG…NNNN) and 864–880 (SSRS…SVGV).

Belongs to the immunoglobulin superfamily. IHOG family. As to quaternary structure, homodimer. Heterotetramer; 2 iHog chains bind 2 hh chains when facilitated by heparin, heparin is required to promote high-affinity interactions between hh and iHog.

It localises to the membrane. In terms of biological role, mediates response to the active Hedgehog (Hh) protein signal in embryos, functioning upstream or at the level of patched (ptc). The chain is Interference hedgehog from Drosophila sechellia (Fruit fly).